Consider the following 154-residue polypeptide: Xanthine-guanine phosphoribosyltransferase (154 aa).

5-phospho-alpha-D-ribose 1-diphosphate-binding positions include arginine 38–glycine 39, lysine 71, and aspartate 90–threonine 98. Position 71 (lysine 71) interacts with GMP. Position 91 (aspartate 91) interacts with Mg(2+). Guanine-binding residues include aspartate 94 and isoleucine 137. Xanthine is bound by residues aspartate 94 and isoleucine 137. GMP-binding positions include aspartate 94 to threonine 98 and tryptophan 136 to isoleucine 137.

This sequence belongs to the purine/pyrimidine phosphoribosyltransferase family. XGPT subfamily. Homotetramer. The cofactor is Mg(2+).

It localises to the cell inner membrane. It carries out the reaction GMP + diphosphate = guanine + 5-phospho-alpha-D-ribose 1-diphosphate. The enzyme catalyses XMP + diphosphate = xanthine + 5-phospho-alpha-D-ribose 1-diphosphate. The catalysed reaction is IMP + diphosphate = hypoxanthine + 5-phospho-alpha-D-ribose 1-diphosphate. Its pathway is purine metabolism; GMP biosynthesis via salvage pathway; GMP from guanine: step 1/1. The protein operates within purine metabolism; XMP biosynthesis via salvage pathway; XMP from xanthine: step 1/1. Functionally, purine salvage pathway enzyme that catalyzes the transfer of the ribosyl-5-phosphate group from 5-phospho-alpha-D-ribose 1-diphosphate (PRPP) to the N9 position of the 6-oxopurines guanine and xanthine to form the corresponding ribonucleotides GMP (guanosine 5'-monophosphate) and XMP (xanthosine 5'-monophosphate), with the release of PPi. To a lesser extent, also acts on hypoxanthine. This is Xanthine-guanine phosphoribosyltransferase from Buchnera aphidicola subsp. Schizaphis graminum (strain Sg).